Consider the following 102-residue polypeptide: Urease subunit beta (102 aa).

It belongs to the urease beta subunit family. Heterotrimer of UreA (gamma), UreB (beta) and UreC (alpha) subunits. Three heterotrimers associate to form the active enzyme.

The protein localises to the cytoplasm. It catalyses the reaction urea + 2 H2O + H(+) = hydrogencarbonate + 2 NH4(+). Its pathway is nitrogen metabolism; urea degradation; CO(2) and NH(3) from urea (urease route): step 1/1. The polypeptide is Urease subunit beta (Clostridium perfringens).